The following is a 273-amino-acid chain: 4-hydroxy-tetrahydrodipicolinate reductase (273 aa).

NAD(+)-binding positions include 11–16 (GATGKM) and 106–108 (GTT). The active-site Proton donor/acceptor is histidine 162. Histidine 163 serves as a coordination point for (S)-2,3,4,5-tetrahydrodipicolinate. Lysine 166 acts as the Proton donor in catalysis. 172 to 173 (GT) lines the (S)-2,3,4,5-tetrahydrodipicolinate pocket.

This sequence belongs to the DapB family.

The protein resides in the cytoplasm. It carries out the reaction (S)-2,3,4,5-tetrahydrodipicolinate + NAD(+) + H2O = (2S,4S)-4-hydroxy-2,3,4,5-tetrahydrodipicolinate + NADH + H(+). It catalyses the reaction (S)-2,3,4,5-tetrahydrodipicolinate + NADP(+) + H2O = (2S,4S)-4-hydroxy-2,3,4,5-tetrahydrodipicolinate + NADPH + H(+). Its pathway is amino-acid biosynthesis; L-lysine biosynthesis via DAP pathway; (S)-tetrahydrodipicolinate from L-aspartate: step 4/4. Functionally, catalyzes the conversion of 4-hydroxy-tetrahydrodipicolinate (HTPA) to tetrahydrodipicolinate. The polypeptide is 4-hydroxy-tetrahydrodipicolinate reductase (Synechococcus sp. (strain ATCC 27144 / PCC 6301 / SAUG 1402/1) (Anacystis nidulans)).